Here is a 611-residue protein sequence, read N- to C-terminus: tRNA uridine 5-carboxymethylaminomethyl modification enzyme MnmG (611 aa).

An FAD-binding site is contributed by glycine 14–glycine 19. Residue glycine 274–phenylalanine 288 coordinates NAD(+).

This sequence belongs to the MnmG family. Homodimer. Heterotetramer of two MnmE and two MnmG subunits. It depends on FAD as a cofactor.

It localises to the cytoplasm. Its function is as follows. NAD-binding protein involved in the addition of a carboxymethylaminomethyl (cmnm) group at the wobble position (U34) of certain tRNAs, forming tRNA-cmnm(5)s(2)U34. The sequence is that of tRNA uridine 5-carboxymethylaminomethyl modification enzyme MnmG from Chlamydia abortus (strain DSM 27085 / S26/3) (Chlamydophila abortus).